The primary structure comprises 119 residues: Large ribosomal subunit protein bL20 (119 aa).

This sequence belongs to the bacterial ribosomal protein bL20 family.

Its function is as follows. Binds directly to 23S ribosomal RNA and is necessary for the in vitro assembly process of the 50S ribosomal subunit. It is not involved in the protein synthesizing functions of that subunit. This Acidovorax ebreus (strain TPSY) (Diaphorobacter sp. (strain TPSY)) protein is Large ribosomal subunit protein bL20.